The following is a 642-amino-acid chain: Chaperone protein HtpG (642 aa).

The segment at 1–349 (MSAATETEVR…SADLPLNVSR (349 aa)) is a; substrate-binding. A disordered region spans residues 216-238 (ELPPAPPAKEGEEPEPPKTPEWE). Over residues 224–236 (KEGEEPEPPKTPE) the composition is skewed to basic and acidic residues. The segment at 350-570 (EILQQNRQVE…AHDMSATLER (221 aa)) is b. Residues 571-642 (LLKEAGQEVP…VKRLNKLLMG (72 aa)) form a c region.

This sequence belongs to the heat shock protein 90 family. Homodimer.

It localises to the cytoplasm. Its function is as follows. Molecular chaperone. Has ATPase activity. This chain is Chaperone protein HtpG, found in Magnetococcus marinus (strain ATCC BAA-1437 / JCM 17883 / MC-1).